The chain runs to 325 residues: DNA-directed RNA polymerase subunit alpha (325 aa).

The segment at 1–238 is alpha N-terminal domain (alpha-NTD); that stretch reads MSLKSLLKGF…EHLTVFINFE (238 aa). The interval 254–325 is alpha C-terminal domain (alpha-CTD); it reads KLKASLSKHV…LGLSFGMRDF (72 aa).

This sequence belongs to the RNA polymerase alpha chain family. As to quaternary structure, homodimer. The RNAP catalytic core consists of 2 alpha, 1 beta, 1 beta' and 1 omega subunit. When a sigma factor is associated with the core the holoenzyme is formed, which can initiate transcription.

It catalyses the reaction RNA(n) + a ribonucleoside 5'-triphosphate = RNA(n+1) + diphosphate. In terms of biological role, DNA-dependent RNA polymerase catalyzes the transcription of DNA into RNA using the four ribonucleoside triphosphates as substrates. The polypeptide is DNA-directed RNA polymerase subunit alpha (Leptospira borgpetersenii serovar Hardjo-bovis (strain JB197)).